Consider the following 136-residue polypeptide: Large ribosomal subunit protein eL27 (136 aa).

The protein belongs to the eukaryotic ribosomal protein eL27 family.

The sequence is that of Large ribosomal subunit protein eL27 (RPL27) from Candida albicans (Yeast).